We begin with the raw amino-acid sequence, 154 residues long: Transcription antitermination protein NusB (154 aa).

Belongs to the NusB family.

Involved in transcription antitermination. Required for transcription of ribosomal RNA (rRNA) genes. Binds specifically to the boxA antiterminator sequence of the ribosomal RNA (rrn) operons. This is Transcription antitermination protein NusB from Enterococcus faecalis (strain ATCC 700802 / V583).